The following is a 502-amino-acid chain: Aspartyl/glutamyl-tRNA(Asn/Gln) amidotransferase subunit B (502 aa).

This sequence belongs to the GatB/GatE family. GatB subfamily. Heterotrimer of A, B and C subunits.

The catalysed reaction is L-glutamyl-tRNA(Gln) + L-glutamine + ATP + H2O = L-glutaminyl-tRNA(Gln) + L-glutamate + ADP + phosphate + H(+). The enzyme catalyses L-aspartyl-tRNA(Asn) + L-glutamine + ATP + H2O = L-asparaginyl-tRNA(Asn) + L-glutamate + ADP + phosphate + 2 H(+). Its function is as follows. Allows the formation of correctly charged Asn-tRNA(Asn) or Gln-tRNA(Gln) through the transamidation of misacylated Asp-tRNA(Asn) or Glu-tRNA(Gln) in organisms which lack either or both of asparaginyl-tRNA or glutaminyl-tRNA synthetases. The reaction takes place in the presence of glutamine and ATP through an activated phospho-Asp-tRNA(Asn) or phospho-Glu-tRNA(Gln). The sequence is that of Aspartyl/glutamyl-tRNA(Asn/Gln) amidotransferase subunit B from Ruegeria sp. (strain TM1040) (Silicibacter sp.).